Consider the following 320-residue polypeptide: MNDNYLILSIESSCDETSLALFENNKLIAHKISSSASIQSLHGGVVPELASRYHEQNINHLFNEILNETKINPLTITHVAYTAMPGLPGCLHVGKVFAKQLAVLINAELVPINHLHAHVFSASINQNLTFPFLGLVVSGGESCIYLVNDYDEIKVLNQTHDDAIGECYDKIARVLGWKYPGGPIIDKNYQENLATLEFIKSQPAAKDFSFSGLKTAVINYIHNAKQKKISFDPVVVASSFQKFAINEIIKKIKYYLNLYKLNHLAIGGGVSANSLLRKKIQSLDVISYIPEMIYTGDNAAMIGAYAYALIKNHKKSILIK.

Fe cation contacts are provided by His-114 and His-118. Substrate-binding positions include 136–140 (VVSGG), Asp-169, Gly-182, Asp-186, and Asn-273. Asp-297 is a binding site for Fe cation.

Belongs to the KAE1 / TsaD family. The cofactor is Fe(2+).

It localises to the cytoplasm. The catalysed reaction is L-threonylcarbamoyladenylate + adenosine(37) in tRNA = N(6)-L-threonylcarbamoyladenosine(37) in tRNA + AMP + H(+). Required for the formation of a threonylcarbamoyl group on adenosine at position 37 (t(6)A37) in tRNAs that read codons beginning with adenine. Is involved in the transfer of the threonylcarbamoyl moiety of threonylcarbamoyl-AMP (TC-AMP) to the N6 group of A37, together with TsaE and TsaB. TsaD likely plays a direct catalytic role in this reaction. The polypeptide is tRNA N6-adenosine threonylcarbamoyltransferase (Ureaplasma parvum serovar 3 (strain ATCC 27815 / 27 / NCTC 11736)).